A 1024-amino-acid polypeptide reads, in one-letter code: Seizure 6-like protein (1024 aa).

An N-terminal signal peptide occupies residues methionine 1–alanine 28. The Extracellular portion of the chain corresponds to leucine 29–alanine 958. 3 disordered regions span residues alanine 33 to alanine 77, arginine 108 to leucine 184, and alanine 212 to glutamine 234. Residue serine 49 is glycosylated (O-linked (GalNAc...) serine). The span at serine 56–valine 66 shows a compositional bias: basic and acidic residues. Over residues lysine 110 to proline 120 the composition is skewed to basic residues. Over residues serine 138–glutamate 162 the composition is skewed to polar residues. O-glycosylated at one site stretches follow at residues serine 147–threonine 161 and serine 176–serine 180. A disulfide bridge links cysteine 281 with cysteine 308. Residues cysteine 281 to phenylalanine 389 form the CUB 1 domain. N-linked (GlcNAc...) asparagine glycosylation is found at asparagine 311, asparagine 328, and asparagine 350. A Sushi 1 domain is found at leucine 391–alanine 450. 2 disulfide bridges follow: cysteine 393–cysteine 433 and cysteine 419–cysteine 448. Asparagine 435, asparagine 458, asparagine 474, asparagine 514, asparagine 576, asparagine 618, asparagine 674, and asparagine 742 each carry an N-linked (GlcNAc...) asparagine glycan. Positions cysteine 452 to phenylalanine 562 constitute a CUB 2 domain. One can recognise a Sushi 2 domain in the interval glycine 565–alanine 626. 2 disulfide bridges follow: cysteine 567–cysteine 609 and cysteine 594–cysteine 624. Residues cysteine 628–valine 739 form the CUB 3 domain. Sushi domains follow at residues aspartate 743–lysine 802, methionine 804–serine 867, and leucine 871–valine 932. 6 cysteine pairs are disulfide-bonded: cysteine 745–cysteine 787, cysteine 773–cysteine 800, cysteine 806–cysteine 848, cysteine 834–cysteine 865, cysteine 873–cysteine 915, and cysteine 901–cysteine 930. A helical transmembrane segment spans residues leucine 959–isoleucine 979. Over threonine 980–isoleucine 1024 the chain is Cytoplasmic.

This sequence belongs to the SEZ6 family. O-glycosylated. In terms of tissue distribution, widely expressed, including adult and fetal brains and lungs. Not expressed in all lung cancer cell lines.

The protein resides in the endoplasmic reticulum membrane. In terms of biological role, may contribute to specialized endoplasmic reticulum functions in neurons. This chain is Seizure 6-like protein (SEZ6L), found in Homo sapiens (Human).